Reading from the N-terminus, the 324-residue chain is Carbamate kinase (324 aa).

This sequence belongs to the carbamate kinase family.

The protein localises to the cytoplasm. The catalysed reaction is hydrogencarbonate + NH4(+) + ATP = carbamoyl phosphate + ADP + H2O + H(+). It functions in the pathway amino-acid degradation; L-arginine degradation via ADI pathway. The polypeptide is Carbamate kinase (Rhizobium meliloti (strain 1021) (Ensifer meliloti)).